The chain runs to 274 residues: Penicillin-insensitive murein endopeptidase (274 aa).

The first 19 residues, 1 to 19, serve as a signal peptide directing secretion; it reads MKKTVIALLAWFVSSASLA. Intrachain disulfides connect cysteine 44–cysteine 265, cysteine 187–cysteine 235, and cysteine 216–cysteine 223. Positions 110, 113, 120, 147, 150, and 211 each coordinate Zn(2+). The disordered stretch occupies residues 225–274; it reads DQPLPPPGDGCGAELQSWFEPPKPGTTKPEKKTPPPLPPSCQALLDEHVL.

Belongs to the peptidase M74 family. As to quaternary structure, dimer. Requires Zn(2+) as cofactor.

It is found in the periplasm. Murein endopeptidase that cleaves the D-alanyl-meso-2,6-diamino-pimelyl amide bond that connects peptidoglycan strands. Likely plays a role in the removal of murein from the sacculus. The polypeptide is Penicillin-insensitive murein endopeptidase (Salmonella paratyphi C (strain RKS4594)).